Here is a 431-residue protein sequence, read N- to C-terminus: Saglin (431 aa).

The N-terminal stretch at 1-39 is a signal peptide; that stretch reads MSVRGYSGVQVISSRKHRSMSRLPTVLLLLASAAVLAAG. N95 is a glycosylation site (N-linked (GlcNAc...) asparagine). Residues 120–169 are a coiled coil; sequence LDDAQRQMEQEHRQYAATLEEQLHAAQQETQQEQEMKKALQKQLDALTDS.

Homodimer; disulfide-linked. In terms of assembly, (Microbial infection) Interacts with Plasmodium berghei TRAP (via integrin-like A-domain); the interaction probably promotes sporozoite invasion of salivary gland. As to expression, female saliva (at protein level). Female salivary gland (at protein level).

It is found in the secreted. Its function is as follows. (Microbial infection) Facilitates invasion of mosquito salivary glands by Plasmodium yoelii sporozoites. In terms of biological role, (Microbial infection) Facilitates invasion of mosquito salivary glands by Plasmodium falciparum sporozoites. Functionally, (Microbial infection) Probably facilitates invasion of mosquito salivary glands by Plasmodium berghei sporozoites. The chain is Saglin from Anopheles gambiae (African malaria mosquito).